Here is a 111-residue protein sequence, read N- to C-terminus: Iron-sulfur cluster insertion protein ErpA (111 aa).

The iron-sulfur cluster site is built by Cys-39, Cys-103, and Cys-105.

Belongs to the HesB/IscA family. As to quaternary structure, homodimer. Iron-sulfur cluster is required as a cofactor.

In terms of biological role, required for insertion of 4Fe-4S clusters for at least IspG. The polypeptide is Iron-sulfur cluster insertion protein ErpA (Acinetobacter baumannii (strain AB307-0294)).